A 156-amino-acid chain; its full sequence is Ribosome maturation factor RimP (156 aa).

The protein belongs to the RimP family.

The protein resides in the cytoplasm. In terms of biological role, required for maturation of 30S ribosomal subunits. The chain is Ribosome maturation factor RimP from Exiguobacterium sp. (strain ATCC BAA-1283 / AT1b).